The primary structure comprises 513 residues: ATP synthase subunit alpha (513 aa).

Residue 169-176 (GDRQTGKT) coordinates ATP.

The protein belongs to the ATPase alpha/beta chains family. F-type ATPases have 2 components, CF(1) - the catalytic core - and CF(0) - the membrane proton channel. CF(1) has five subunits: alpha(3), beta(3), gamma(1), delta(1), epsilon(1). CF(0) has three main subunits: a(1), b(2) and c(9-12). The alpha and beta chains form an alternating ring which encloses part of the gamma chain. CF(1) is attached to CF(0) by a central stalk formed by the gamma and epsilon chains, while a peripheral stalk is formed by the delta and b chains.

It localises to the cell inner membrane. It carries out the reaction ATP + H2O + 4 H(+)(in) = ADP + phosphate + 5 H(+)(out). Produces ATP from ADP in the presence of a proton gradient across the membrane. The alpha chain is a regulatory subunit. This is ATP synthase subunit alpha from Bordetella avium (strain 197N).